A 501-amino-acid polypeptide reads, in one-letter code: Aldehyde dehydrogenase 1A1 (501 aa).

Ser-2 is subject to N-acetylserine. N6-acetyllysine is present on residues Lys-91 and Lys-128. Residues 167-170, 193-196, 226-227, and 246-247 each bind NAD(+); these read IPWN, KPAE, GP, and GS. Lys-252 is subject to N6-acetyllysine. Residue Glu-269 is the Proton acceptor of the active site. 269 to 271 lines the NAD(+) pocket; it reads ELG. The active-site Nucleophile is Cys-303. The interval 336–501 is mediates interaction with PRMT3; that stretch reads LTPGVTQGPQ…VTVKISQKNS (166 aa). At Thr-337 the chain carries Phosphothreonine. NAD(+) is bound at residue 349–353; sequence EQYDK. Residues Lys-353 and Lys-367 each carry the N6-acetyllysine modification. NAD(+) is bound at residue 400–402; sequence EIF. Position 410 is an N6-acetyllysine (Lys-410). Phosphoserine is present on Ser-413. Lys-419, Lys-435, and Lys-495 each carry N6-acetyllysine.

Belongs to the aldehyde dehydrogenase family. Homotetramer. Interacts with PRMT3; the interaction is direct, inhibits ALDH1A1 aldehyde dehydrogenase activity and is independent of the methyltransferase activity of PRMT3. In terms of processing, the N-terminus is blocked most probably by acetylation. In terms of tissue distribution, expressed by erythrocytes (at protein level).

Its subcellular location is the cytoplasm. It is found in the cytosol. The protein resides in the cell projection. It localises to the axon. The catalysed reaction is an aldehyde + NAD(+) + H2O = a carboxylate + NADH + 2 H(+). The enzyme catalyses all-trans-retinal + NAD(+) + H2O = all-trans-retinoate + NADH + 2 H(+). It carries out the reaction 9-cis-retinal + NAD(+) + H2O = 9-cis-retinoate + NADH + 2 H(+). It catalyses the reaction 11-cis-retinal + NAD(+) + H2O = 11-cis-retinoate + NADH + 2 H(+). The catalysed reaction is 13-cis-retinal + NAD(+) + H2O = 13-cis-retinoate + NADH + 2 H(+). The enzyme catalyses 3-deoxyglucosone + NAD(+) + H2O = 2-dehydro-3-deoxy-D-gluconate + NADH + 2 H(+). It carries out the reaction (E)-4-hydroxynon-2-enal + NAD(+) + H2O = (E)-4-hydroxynon-2-enoate + NADH + 2 H(+). It catalyses the reaction malonaldehyde + NAD(+) + H2O = 3-oxopropanoate + NADH + 2 H(+). The catalysed reaction is hexanal + NAD(+) + H2O = hexanoate + NADH + 2 H(+). The enzyme catalyses propanal + NAD(+) + H2O = propanoate + NADH + 2 H(+). It carries out the reaction acetaldehyde + NAD(+) + H2O = acetate + NADH + 2 H(+). It catalyses the reaction benzaldehyde + NAD(+) + H2O = benzoate + NADH + 2 H(+). The catalysed reaction is 4-aminobutanal + NAD(+) + H2O = 4-aminobutanoate + NADH + 2 H(+). Its pathway is cofactor metabolism; retinol metabolism. Its activity is regulated as follows. Inhibited by citral, disulfiram, and cyanamide. Activated by diethylstilbestrol. Inhibited by duocarmycin analogs. Functionally, cytosolic dehydrogenase that catalyzes the irreversible oxidation of a wide range of aldehydes to their corresponding carboxylic acid. Functions downstream of retinol dehydrogenases and catalyzes the oxidation of retinaldehyde into retinoic acid, the second step in the oxidation of retinol/vitamin A into retinoic acid. This pathway is crucial to control the levels of retinol and retinoic acid, two important molecules which excess can be teratogenic and cytotoxic. Also oxidizes aldehydes resulting from lipid peroxidation like (E)-4-hydroxynon-2-enal/HNE, malonaldehyde and hexanal that form protein adducts and are highly cytotoxic. By participating for instance to the clearance of (E)-4-hydroxynon-2-enal/HNE in the lens epithelium prevents the formation of HNE-protein adducts and lens opacification. Also functions downstream of fructosamine-3-kinase in the fructosamine degradation pathway by catalyzing the oxidation of 3-deoxyglucosone, the carbohydrate product of fructosamine 3-phosphate decomposition, which is itself a potent glycating agent that may react with lysine and arginine side-chains of proteins. Also has an aminobutyraldehyde dehydrogenase activity and is probably part of an alternative pathway for the biosynthesis of GABA/4-aminobutanoate in midbrain, thereby playing a role in GABAergic synaptic transmission. The sequence is that of Aldehyde dehydrogenase 1A1 from Homo sapiens (Human).